The following is a 565-amino-acid chain: Sodium/hydrogen exchanger 9B1 (565 aa).

2 stretches are compositionally biased toward basic and acidic residues: residues 1 to 14 (MSEH…KDDG) and 23 to 86 (MSKD…ETQT). The tract at residues 1–112 (MSEHDVESNK…RGTNSYCPPQ (112 aa)) is disordered. The next 13 membrane-spanning stretches (helical) occupy residues 122–142 (GAAL…EVLP), 146–166 (LFGL…LEFI), 167–187 (KIPV…GFTI), 206–223 (ALRN…GLGL), 238–258 (LSFG…HFIM), 266–286 (FLLG…NMLM), 311–331 (IVAI…GSVI), 341–361 (VLIG…FPSG), 371–391 (AFLV…IGLH), 419–439 (IVAN…GTEV), 449–469 (IGMC…STFV), 482–502 (VFIA…GPLA), and 523–543 (VAFL…GILG).

This sequence belongs to the monovalent cation:proton antiporter 1 (CPA1) transporter (TC 2.A.36) family. In terms of tissue distribution, testis-specific. Expressed in the spermatids and spermatozoa (at protein level). Specifically present in the principal piece of sperm tail (at protein level).

It is found in the cell projection. The protein resides in the cilium. The protein localises to the flagellum membrane. In terms of biological role, sperm-specific Na(+)/H(+) exchanger involved in intracellular pH regulation of spermatozoa. Involved in sperm motility and fertility. The chain is Sodium/hydrogen exchanger 9B1 from Mus musculus (Mouse).